The chain runs to 211 residues: Claudin-1 (211 aa).

At 1-7 (MANAGLQ) the chain is on the cytoplasmic side. A helical membrane pass occupies residues 8–28 (LLGFILASLGWIGSIVSTALP). At 29–81 (QWKIYSYAGDNIVTAQAIYEGLWMSCVSQSTGQIQCKVFDSLLNLNSTLQATR) the chain is on the extracellular side. Cys54 and Cys64 are oxidised to a cystine. The helical transmembrane segment at 82-102 (ALMVIGILLGLIAIFVSTIGM) threads the bilayer. The Cytoplasmic portion of the chain corresponds to 103-115 (KCMRCLEDDEVQK). The chain crosses the membrane as a helical span at residues 116–136 (MWMAVIGGIIFVISGLATLVA). Residues 137-163 (TAWYGNRIVQEFYDPMTPVNARYEFGQ) are Extracellular-facing. The chain crosses the membrane as a helical span at residues 164 to 184 (ALFTGWAAASLCLLGGALLSC). The Cytoplasmic portion of the chain corresponds to 185-211 (SCPRKTTSYPTPRPYPKPTPSSGKDYV). Residues 190–211 (TTSYPTPRPYPKPTPSSGKDYV) are disordered. Positions 210-211 (YV) are interactions with TJP1, TJP2, TJP3 and PATJ.

This sequence belongs to the claudin family. In terms of assembly, can form homo- and heteropolymers with other CLDN. Homopolymers interact with CLDN3, but not CLDN2, homopolymers. Directly interacts with TJP1/ZO-1, TJP2/ZO-2 and TJP3/ZO-3. Interacts with MPDZ and PATJ. Interacts with OCLN, CD81, CLDN4, CLDN6 and CLDN9. Detected in epididymis (at protein level). Detected in testis and epididymis.

Its subcellular location is the cell junction. It localises to the tight junction. The protein resides in the cell membrane. It is found in the basolateral cell membrane. In terms of biological role, claudins function as major constituents of the tight junction complexes that regulate the permeability of epithelia. While some claudin family members play essential roles in the formation of impermeable barriers, others mediate the permeability to ions and small molecules. Often, several claudin family members are coexpressed and interact with each other, and this determines the overall permeability. CLDN1 is required to prevent the paracellular diffusion of small molecules through tight junctions in the epidermis and is required for the normal barrier function of the skin. Required for normal water homeostasis and to prevent excessive water loss through the skin, probably via an indirect effect on the expression levels of other proteins, since CLDN1 itself seems to be dispensable for water barrier formation in keratinocyte tight junctions. The sequence is that of Claudin-1 (Cldn1) from Rattus norvegicus (Rat).